A 1001-amino-acid chain; its full sequence is Chloride channel protein clh-3 (1001 aa).

Residues 1 to 48 (MGIGTKILSKIEKNKTSDGLTIPLTPTTQKQSSSWCSFESIKTFFRTV) lie on the Cytoplasmic side of the membrane. 2 helical membrane passes run 49 to 85 (IRDW…RLFD) and 91 to 117 (HFTL…AHYI). A Selectivity filter part_1 motif is present at residues 123–127 (GSGIP). A chloride-binding site is contributed by serine 124. Positions 126–133 (IPEMKTIL) form an intramembrane region, helical. Helical transmembrane passes span 142–160 (LSVR…SLGS) and 167–185 (EGPF…TRLV). Residues 165–169 (GKEGP) carry the Selectivity filter part_2 motif. Intramembrane regions (helical) lie at residues 202–214 (MLAA…VACT) and 218–226 (PIGGVLFSI). Transmembrane regions (helical) follow at residues 238 to 258 (YWRG…LRMF), 285 to 313 (LPIF…VLFL), 322 to 341 (IFQK…ISSL), 405 to 425 (YSPF…AILA), and 433 to 456 (GIFM…VFSL). The short motif at 433-437 (GIFMP) is the Selectivity filter part_3 element. The chloride site is built by isoleucine 434 and phenylalanine 435. The helical intramembrane region spans 473-487 (GVYAVVGAAAFCGAV). The segment at residues 488-489 (TH) is an intramembrane region (note=Loop between two helices). An intramembrane region (helical) is located at residues 490–501 (TVSVAVIVFELT). The note=Loop between two helices intramembrane region spans 502–506 (GQLCH). Residues 507-524 (LLPVMIAVLIANAVASYL) form a helical membrane-spanning segment. Residues 525-1001 (QPSIYDSIIR…LPDDVHDEKF (477 aa)) are Cytoplasmic-facing. A chloride-binding site is contributed by tyrosine 529. The 60-residue stretch at 560–619 (MISPLVYIAKDSTVGDIKRALETKTRIRAFPLVENMESLALVGSVSRSQLQRYVDSQIGT) folds into the CBS 1 domain. Positions 625-657 (EATRRIKQRLEDEESERKRREESKSDDTEDSLE) form a coiled coil. The span at 634–650 (LEDEESERKRREESKSD) shows a compositional bias: basic and acidic residues. Residues 634–662 (LEDEESERKRREESKSDDTEDSLETTGAG) form a disordered region. Residues serine 742 and serine 747 each carry the phosphoserine; by gck-3 modification. The CBS 2 domain maps to 788 to 845 (IDSTPFQLSEYTSLFKAHSLFSLLGLNRAYVTKKGQLIGVVALKELRLAIEYLQSGKV).

The protein belongs to the chloride channel (TC 2.A.49) family. In terms of assembly, isoform a interacts (via RFLI motif) with gck-3 (via C-terminus). Post-translationally, phosphorylated by gck-3; phosphorylation at both Ser-742 and Ser-747 is required to inhibit channel activity. Dephosphorylated by gsp-1/2 during cell swelling and oocyte meiotic maturation, which results in channel activation. As to expression, expressed in excretory cell, 4 anterior epithelial cells of the intestine, hermaphrodite-specific neurons and enteric muscles. Expressed also in vulva and uterus. Isoform a is expressed in oocytes (at protein level).

The protein localises to the cell membrane. Functionally, voltage-gated chloride channel. Insensitive to depolarizing conditioning voltages, requires low voltages for activation, insensitive to chloride levels and has a mild sensitivity to low pH. Channel gating properties are conferred by the cytoplasmic C-terminus. Plays a role in egg laying by modulating hermaphrodite-specific neurons (HSN) excitability and the ovulatory contractions of gap-junction-coupled gonadal sheath cells. When active, may prevent tubular formation of the excretory canals. Activated during oocyte meiotic maturation and by membrane hyperpolarization and cell swelling. Inhibited by Zn(2+) and to a lesser extent by Cd(2+). In terms of biological role, voltage-gated chloride channel. Sensitive to depolarizing conditioning voltages, requires stronger voltages for activation and activation is slower, is inhibited by low concentrations of chloride and is activated by low pH. Channel gating properties are conferred by the cytoplasmic C-terminus. The chain is Chloride channel protein clh-3 from Caenorhabditis elegans.